The chain runs to 1275 residues: Myosin-1 (1275 aa).

The Myosin motor domain occupies 35 to 727; sequence VGVSDLTLLS…TLFAMEDMRD (693 aa). Position 128 to 135 (128 to 135) interacts with ATP; that stretch reads GESGAGKT. Serine 361 is modified (phosphoserine). The segment at 410–493 is actin-binding; that stretch reads TIGILDIYGF…PGLFAALNDS (84 aa). 2 consecutive IQ domains span residues 731-751 and 752-777; these read HNMA…KEDA and ARLI…YGNG. The TH1 domain occupies 785 to 974; that stretch reads RRRMSMLGSR…KSGTVSVRPG (190 aa). 4 disordered regions span residues 966–1064, 1089–1128, 1183–1230, and 1251–1275; these read SGTV…LNNN, QNHN…AKPK, SECP…GGLS, and IADA…DDDW. The span at 977–992 shows a compositional bias: polar residues; it reads PDSQNPKRPRATSSKV. Low complexity predominate over residues 1095–1106; it reads PTAPSRPAKKAA. The span at 1107 to 1121 shows a compositional bias: pro residues; it reads PAPPVKKTAPPPPPS. Residues 1127-1187 enclose the SH3 domain; it reads PKWPTFKANY…PTAYISECPP (61 aa). Residues 1254 to 1263 show a composition bias toward basic and acidic residues; the sequence is ALKKRSATRD. Positions 1264 to 1275 are enriched in acidic residues; sequence SDDEEEDDDDDW.

Belongs to the TRAFAC class myosin-kinesin ATPase superfamily. Myosin family. In terms of processing, phosphorylation of the TEDS site (Ser-361) is required for the polarization of the actin cytoskeleton. Phosphorylation probably activates the myosin-I ATPase activity.

The protein resides in the cytoplasm. It is found in the cytoskeleton. Its subcellular location is the actin patch. Type-I myosin implicated in the organization of the actin cytoskeleton. Required for proper actin cytoskeleton polarization. At the cell cortex, assembles in patch-like structures together with proteins from the actin-polymerizing machinery and promotes actin assembly. Functions as actin nucleation-promoting factor (NPF) for the Arp2/3 complex. The protein is Myosin-1 (MYO1) of Meyerozyma guilliermondii (strain ATCC 6260 / CBS 566 / DSM 6381 / JCM 1539 / NBRC 10279 / NRRL Y-324) (Yeast).